The following is a 183-amino-acid chain: Protein Syd (183 aa).

This sequence belongs to the Syd family.

The protein resides in the cell inner membrane. In terms of biological role, interacts with the SecY protein in vivo. May bind preferentially to an uncomplexed state of SecY, thus functioning either as a chelating agent for excess SecY in the cell or as a regulatory factor that negatively controls the translocase function. The chain is Protein Syd from Aliivibrio fischeri (strain MJ11) (Vibrio fischeri).